The following is a 630-amino-acid chain: Triacylglycerol lipase ptl2 (630 aa).

The region spanning 251 to 442 (LCLSGGASFA…RTDIPLSELR (192 aa)) is the PNPLA domain. Positions 282–286 (GTSGG) match the GXSXG motif. Ser284 (nucleophile) is an active-site residue. Asp429 acts as the Proton acceptor in catalysis.

Belongs to the PLPL family.

It localises to the lipid droplet. It carries out the reaction a triacylglycerol + H2O = a diacylglycerol + a fatty acid + H(+). In terms of biological role, lipid particle-localized triacylglycerol (TAG) lipase. The lipid droplet/particle is a lipid storage compartment which serves as a depot of energy and building blocks for membrane lipid biosynthesis. Involved in the mobilization of the non-polar storage lipids triacylglycerols (TAGs) from lipid particles by hydrolysis of TAGs, releasing and supplying specific fatty acids to the appropriate metabolic pathways. The chain is Triacylglycerol lipase ptl2 (ptl2) from Schizosaccharomyces pombe (strain 972 / ATCC 24843) (Fission yeast).